We begin with the raw amino-acid sequence, 170 residues long: Protein ripply3 (170 aa).

The WRPW motif motif lies at 40–43; sequence WRPW. Positions 51–61 are enriched in basic and acidic residues; the sequence is ELDGQQRRSGE. The interval 51 to 78 is disordered; it reads ELDGQQRRSGEADGVPTNTGPKGALGFQ. A ripply homology domain region spans residues 79–114; the sequence is HPVRLYMPKSKTSEYLQHMGRKVLASFPVQATIHFY. Residues 142–155 are compositionally biased toward polar residues; that stretch reads GVDSSRGSSDNYSV. The disordered stretch occupies residues 142–170; sequence GVDSSRGSSDNYSVQGGPKRNIGSHAGSA.

The protein belongs to the ripply family. In terms of assembly, interacts with tbx1 and tle4/grg4. At neurula stage, expressed in the region close to the heart mesoderm. At the tailbud stage, expressed in the pharyngeal region.

The protein localises to the nucleus. In terms of biological role, acts as a transcriptional corepressor. Negative regulator of the transcriptional activity of tbx1 that plays a key role in pharyngeal development. Plays a role in the formation of the anteroposterior (AP) axis during embryonic development; required to establish the posterolateral border of the pre-placodal ectoderm (PPE) acting downstream of the retinoic acid receptor (RAR) signaling. The chain is Protein ripply3 (ripply3) from Xenopus laevis (African clawed frog).